Consider the following 271-residue polypeptide: Orotidine 5'-phosphate decarboxylase (271 aa).

Catalysis depends on Lys-95, which acts as the Proton donor.

Belongs to the OMP decarboxylase family. Type 2 subfamily.

The catalysed reaction is orotidine 5'-phosphate + H(+) = UMP + CO2. Its pathway is pyrimidine metabolism; UMP biosynthesis via de novo pathway; UMP from orotate: step 2/2. The polypeptide is Orotidine 5'-phosphate decarboxylase (Aromatoleum aromaticum (strain DSM 19018 / LMG 30748 / EbN1) (Azoarcus sp. (strain EbN1))).